The chain runs to 248 residues: 1,2-phenylacetyl-CoA epoxidase, subunit C (248 aa).

Residues 76 to 79 (QFSN) and 177 to 179 (IAL) each bind substrate.

In terms of assembly, forms a stable heterotetramer (dimer of heterodimers) with PaaA and a stable heterodimer with PaaB.

It participates in aromatic compound metabolism; phenylacetate degradation. Component of 1,2-phenylacetyl-CoA epoxidase multicomponent enzyme system which catalyzes the reduction of phenylacetyl-CoA (PA-CoA) to form 1,2-epoxyphenylacetyl-CoA. The subunit C may be essential for structural integrity of the alpha subunit. The chain is 1,2-phenylacetyl-CoA epoxidase, subunit C (paaC) from Escherichia coli (strain K12).